The primary structure comprises 298 residues: Homoserine kinase (298 aa).

Position 85 to 95 (85 to 95 (PMGGLGSSAAS)) interacts with ATP.

It belongs to the GHMP kinase family. Homoserine kinase subfamily.

The protein localises to the cytoplasm. It catalyses the reaction L-homoserine + ATP = O-phospho-L-homoserine + ADP + H(+). It participates in amino-acid biosynthesis; L-threonine biosynthesis; L-threonine from L-aspartate: step 4/5. Functionally, catalyzes the ATP-dependent phosphorylation of L-homoserine to L-homoserine phosphate. This is Homoserine kinase from Methanopyrus kandleri (strain AV19 / DSM 6324 / JCM 9639 / NBRC 100938).